Consider the following 567-residue polypeptide: uncharacterized protein (567 aa).

The segment at 1 to 26 is disordered; sequence MPSEKATTRHLPGAVETLSPRTGRRP. The next 6 helical transmembrane spans lie at 57-77, 90-110, 142-162, 173-193, 221-241, and 257-277; these read AILVTNVIGLIVGAMLLTVAF, VSFGIVPGYCVLAFILGTYWL, VALAVLFLWGAAAALWTIIYG, LFSMGVIGVVAATSCYLLTEF, MLVWLLCSGVPNVGVALTAIF, and VLILWAPLLIFGFILMWILAW. Residues 278 to 329 enclose the HAMP domain; that stretch reads LTATPVRVVREALNRVEQGDLSGDLVVFDGTELGELQRGFNRMVEGLRERER. Positions 361-485 constitute a Guanylate cyclase domain; that stretch reads AVVFVDIVGS…EPVNEAARLC (125 aa).

It belongs to the adenylyl cyclase class-3 family.

The protein localises to the cell membrane. This is an uncharacterized protein from Mycobacterium tuberculosis (strain ATCC 25618 / H37Rv).